Consider the following 627-residue polypeptide: 1-deoxy-D-xylulose-5-phosphate synthase (627 aa).

Residues histidine 76 and 117-119 (SHA) each bind thiamine diphosphate. Aspartate 148 is a Mg(2+) binding site. Residues 149–150 (GA), asparagine 178, phenylalanine 288, and glutamate 370 each bind thiamine diphosphate. A Mg(2+)-binding site is contributed by asparagine 178.

Belongs to the transketolase family. DXPS subfamily. Homodimer. Mg(2+) is required as a cofactor. The cofactor is thiamine diphosphate.

The catalysed reaction is D-glyceraldehyde 3-phosphate + pyruvate + H(+) = 1-deoxy-D-xylulose 5-phosphate + CO2. Its pathway is metabolic intermediate biosynthesis; 1-deoxy-D-xylulose 5-phosphate biosynthesis; 1-deoxy-D-xylulose 5-phosphate from D-glyceraldehyde 3-phosphate and pyruvate: step 1/1. Catalyzes the acyloin condensation reaction between C atoms 2 and 3 of pyruvate and glyceraldehyde 3-phosphate to yield 1-deoxy-D-xylulose-5-phosphate (DXP). In Cutibacterium acnes (strain DSM 16379 / KPA171202) (Propionibacterium acnes), this protein is 1-deoxy-D-xylulose-5-phosphate synthase.